Consider the following 371-residue polypeptide: Chaperone protein DnaJ (371 aa).

The 65-residue stretch at 5-69 folds into the J domain; sequence DYYEVLGLSK…QKRAQYDQFG (65 aa). A CR-type zinc finger spans residues 133 to 215; the sequence is GKELNVEIPV…CHGSGKVRKR (83 aa). Cys-146, Cys-149, Cys-163, Cys-166, Cys-189, Cys-192, Cys-203, and Cys-206 together coordinate Zn(2+). CXXCXGXG motif repeat units follow at residues 146-153, 163-170, 189-196, and 203-210; these read CDTCKGSG, CKHCSGSG, CSHCSGTG, and CTTCHGSG.

The protein belongs to the DnaJ family. As to quaternary structure, homodimer. Zn(2+) serves as cofactor.

It is found in the cytoplasm. Participates actively in the response to hyperosmotic and heat shock by preventing the aggregation of stress-denatured proteins and by disaggregating proteins, also in an autonomous, DnaK-independent fashion. Unfolded proteins bind initially to DnaJ; upon interaction with the DnaJ-bound protein, DnaK hydrolyzes its bound ATP, resulting in the formation of a stable complex. GrpE releases ADP from DnaK; ATP binding to DnaK triggers the release of the substrate protein, thus completing the reaction cycle. Several rounds of ATP-dependent interactions between DnaJ, DnaK and GrpE are required for fully efficient folding. Also involved, together with DnaK and GrpE, in the DNA replication of plasmids through activation of initiation proteins. In Bacillus cereus (strain 03BB102), this protein is Chaperone protein DnaJ.